A 141-amino-acid chain; its full sequence is Transcriptional regulator MraZ (141 aa).

SpoVT-AbrB domains follow at residues 5-47 and 76-119; these read TFNL…KPAD and ANLV…DKVQ.

This sequence belongs to the MraZ family. Forms oligomers.

It localises to the cytoplasm. The protein resides in the nucleoid. This chain is Transcriptional regulator MraZ, found in Mycoplasma genitalium (strain ATCC 33530 / DSM 19775 / NCTC 10195 / G37) (Mycoplasmoides genitalium).